Here is a 497-residue protein sequence, read N- to C-terminus: ATP synthase subunit alpha 2 (497 aa).

Gly167–Thr174 serves as a coordination point for ATP.

Belongs to the ATPase alpha/beta chains family. As to quaternary structure, F-type ATPases have 2 components, CF(1) - the catalytic core - and CF(0) - the membrane proton channel. CF(1) has five subunits: alpha(3), beta(3), gamma(1), delta(1), epsilon(1). CF(0) has four main subunits: a(1), b(1), b'(1) and c(9-12).

Its subcellular location is the cell inner membrane. It carries out the reaction ATP + H2O + 4 H(+)(in) = ADP + phosphate + 5 H(+)(out). In terms of biological role, produces ATP from ADP in the presence of a proton gradient across the membrane. The alpha chain is a regulatory subunit. The polypeptide is ATP synthase subunit alpha 2 (Cereibacter sphaeroides (strain ATCC 17029 / ATH 2.4.9) (Rhodobacter sphaeroides)).